Consider the following 159-residue polypeptide: Antitoxin Xre (159 aa).

This sequence belongs to the MbcA/ParS/Xre antitoxin family. Homodimer. Forms a complex with cognate toxin Res; the 2 toxin molecules dimerize and each contacts an Xre homodimer. Most Res-Xre contacts are between the antitoxin molecule closest to the toxin.

In terms of biological role, probable antitoxin component of a type II toxin-antitoxin (TA) system. In vivo probably neutralizes the toxic effect of cognate toxin Res. The sequence is that of Antitoxin Xre from Pseudomonas putida (strain ATCC 47054 / DSM 6125 / CFBP 8728 / NCIMB 11950 / KT2440).